We begin with the raw amino-acid sequence, 88 residues long: Low calcium response locus protein S (88 aa).

It belongs to the transposase 8 family.

This is Low calcium response locus protein S (lcrS) from Yersinia pestis.